Consider the following 204-residue polypeptide: Transcription factor bHLH120 (204 aa).

Disordered stretches follow at residues 1-27 (MNPS…KKEK) and 93-116 (KREI…RSEP). Residues 26-78 (EKKLLHRNIERQRRQEMAILFASLRSQLPLKYIKGKRAMSDHVNGAVSFIKDT) enclose the bHLH domain.

As to quaternary structure, homodimer.

It is found in the nucleus. The protein is Transcription factor bHLH120 (BHLH120) of Arabidopsis thaliana (Mouse-ear cress).